A 110-amino-acid chain; its full sequence is MQFKFLTTVALATLAVAVPTDPPPTNQCNAPNNLECCNSVQAPTNSGLIGTLLGLLNISVGDITGLVGLTCNPISLIGGGNSCNAQTVCCQNNYFGGLISIGCTPIIIDV.

The signal sequence occupies residues 1-17 (MQFKFLTTVALATLAVA). Intrachain disulfides connect cysteine 28–cysteine 89, cysteine 36–cysteine 83, cysteine 37–cysteine 71, and cysteine 90–cysteine 103. An N-linked (GlcNAc...) asparagine glycan is attached at asparagine 57.

It belongs to the fungal hydrophobin family. Self-assembles to form functional amyloid fibrils called rodlets. Self-assembly into fibrillar rodlets occurs spontaneously at hydrophobic:hydrophilic interfaces and the rodlets further associate laterally to form amphipathic monolayers.

It is found in the secreted. The protein resides in the cell wall. In terms of biological role, aerial growth, conidiation, and dispersal of filamentous fungi in the environment rely upon a capability of their secreting small amphipathic proteins called hydrophobins (HPBs) with low sequence identity. Class I can self-assemble into an outermost layer of rodlet bundles on aerial cell surfaces, conferring cellular hydrophobicity that supports fungal growth, development and dispersal; whereas Class II form highly ordered films at water-air interfaces through intermolecular interactions but contribute nothing to the rodlet structure. CoH2 is an asexual monokaryon-specific class I hydrophobin that is involved in aerial growth of mycelia. This chain is Class I hydrophobin 2, found in Coprinopsis cinerea (Inky cap fungus).